A 225-amino-acid polypeptide reads, in one-letter code: Probable GTP-binding protein EngB (225 aa).

In terms of domain architecture, EngB-type G spans 31–204 (VGVEIAFAGR…LGILDSWCKP (174 aa)). GTP is bound by residues 39–46 (GRSNAGKS), 65–69 (GRTQL), 83–86 (DLPG), 150–153 (TKAD), and 183–185 (FSS). The Mg(2+) site is built by serine 46 and threonine 67.

Belongs to the TRAFAC class TrmE-Era-EngA-EngB-Septin-like GTPase superfamily. EngB GTPase family. Mg(2+) serves as cofactor.

Necessary for normal cell division and for the maintenance of normal septation. In Shewanella pealeana (strain ATCC 700345 / ANG-SQ1), this protein is Probable GTP-binding protein EngB.